The primary structure comprises 305 residues: Mitochondrial distribution and morphology protein 12 (305 aa).

One can recognise an SMP-LTD domain in the interval 1 to 236; it reads MSVEIDWDNI…WPSWIDLDFT (236 aa). The interval 233 to 305 is disordered; it reads LDFTPEDPED…RVNSNTSLEE (73 aa). Residues 235–248 are compositionally biased toward acidic residues; that stretch reads FTPEDPEDPEEEGR. Residues 258-269 show a composition bias toward basic and acidic residues; sequence NDGKDIEMKSGT. Polar residues predominate over residues 279-305; sequence ESVQHVSPAVTSIDQESRVNSNTSLEE.

The protein belongs to the MDM12 family. In terms of assembly, component of the ER-mitochondria encounter structure (ERMES) or MDM complex, composed of MMM1, MDM10, MDM12 and MDM34. An MMM1 homodimer associates with one molecule of MDM12 on each side in a pairwise head-to-tail manner, and the SMP-LTD domains of MMM1 and MDM12 generate a continuous hydrophobic tunnel for phospholipid trafficking.

Its subcellular location is the mitochondrion outer membrane. The protein localises to the endoplasmic reticulum membrane. Functionally, component of the ERMES/MDM complex, which serves as a molecular tether to connect the endoplasmic reticulum (ER) and mitochondria. Components of this complex are involved in the control of mitochondrial shape and protein biogenesis, and function in nonvesicular lipid trafficking between the ER and mitochondria. MDM12 is required for the interaction of the ER-resident membrane protein MMM1 and the outer mitochondrial membrane-resident beta-barrel protein MDM10. The MDM12-MMM1 subcomplex functions in the major beta-barrel assembly pathway that is responsible for biogenesis of all mitochondrial outer membrane beta-barrel proteins, and acts in a late step after the SAM complex. The MDM10-MDM12-MMM1 subcomplex further acts in the TOM40-specific pathway after the action of the MDM12-MMM1 complex. Essential for establishing and maintaining the structure of mitochondria and maintenance of mtDNA nucleoids. This Kluyveromyces lactis (strain ATCC 8585 / CBS 2359 / DSM 70799 / NBRC 1267 / NRRL Y-1140 / WM37) (Yeast) protein is Mitochondrial distribution and morphology protein 12.